We begin with the raw amino-acid sequence, 136 residues long: Large-conductance mechanosensitive channel (136 aa).

2 helical membrane-spanning segments follow: residues 10 to 30 (FAMR…AAFG) and 76 to 96 (GVFI…FMAI).

It belongs to the MscL family. As to quaternary structure, homopentamer.

The protein resides in the cell inner membrane. Its function is as follows. Channel that opens in response to stretch forces in the membrane lipid bilayer. May participate in the regulation of osmotic pressure changes within the cell. This chain is Large-conductance mechanosensitive channel, found in Shigella boydii serotype 18 (strain CDC 3083-94 / BS512).